We begin with the raw amino-acid sequence, 323 residues long: AASGVATNTPTANDEEYITPVTIGGTTLNLNFDTGSADLWVFSTELPASQQSGHSVYNPSATGKELSGYTWSISYGDGSSASGNVFTDSVTVGGVTAHGQAVQAAQQISAQFQQDTNNDGLLGLAFSSINTVQPQSQTTFFDTVKSSLAQPLFAVALKHQQPGVYDFGFIDSSKYTGSLTYTGVDNSQGFWSFNVDSYTAGSQSGDGFSGIADTGTTLLLLDDSVVSQYYSQVSGAQQDSNAGGYVFDCSTNLPDFSVSISGYTATVPGSLINYGPSGDGSTCLGGIQSNSGIGFSIFGDIFLKSQYVVFDSDGPQLGFAPQA.

O-linked (Man...) serine glycosylation is present at Ser3. Thr7 carries O-linked (Man...) threonine glycosylation. A Peptidase A1 domain is found at 17-320; that stretch reads YITPVTIGGT…DSDGPQLGFA (304 aa). Residues Asp33 and Asp213 contribute to the active site. A disulfide bond links Cys249 and Cys283.

Belongs to the peptidase A1 family. In terms of assembly, monomer.

It is found in the secreted. It catalyses the reaction Hydrolysis of proteins with broad specificity similar to that of pepsin A, preferring hydrophobic residues at P1 and P1', but also cleaving 20-Gly-|-Glu-21 in the B chain of insulin. Clots milk, and activates trypsinogen.. Its function is as follows. Secreted aspartic endopeptidase that allows assimilation of proteinaceous substrates. The scissile peptide bond is attacked by a nucleophilic water molecule activated by two aspartic residues in the active site. Shows a broad primary substrate specificity. Favors hydrophobic residues at the P1 and P1' positions, but can also activate trypsinogen and hydrolyze the B chain of insulin between positions 'Gly-20' and 'Glu-21'. This Penicillium janthinellum (Penicillium vitale) protein is Penicillopepsin-1.